The chain runs to 185 residues: Orotate phosphoribosyltransferase (185 aa).

5-phospho-alpha-D-ribose 1-diphosphate is bound by residues Arg98, Lys99, Lys102, His104, and 128 to 136; that span reads EDVTTTGGS. The orotate site is built by Thr132 and Arg160.

It belongs to the purine/pyrimidine phosphoribosyltransferase family. PyrE subfamily. In terms of assembly, homodimer. The cofactor is Mg(2+).

The enzyme catalyses orotidine 5'-phosphate + diphosphate = orotate + 5-phospho-alpha-D-ribose 1-diphosphate. It functions in the pathway pyrimidine metabolism; UMP biosynthesis via de novo pathway; UMP from orotate: step 1/2. Functionally, catalyzes the transfer of a ribosyl phosphate group from 5-phosphoribose 1-diphosphate to orotate, leading to the formation of orotidine monophosphate (OMP). The protein is Orotate phosphoribosyltransferase of Bradyrhizobium sp. (strain ORS 278).